Here is a 264-residue protein sequence, read N- to C-terminus: Glutamate racemase (264 aa).

Substrate-binding positions include 10–11 (DS) and 42–43 (YG). The Proton donor/acceptor role is filled by Cys-73. 74 to 75 (NT) serves as a coordination point for substrate. The active-site Proton donor/acceptor is Cys-181. A substrate-binding site is contributed by 182–183 (TH).

The protein belongs to the aspartate/glutamate racemases family.

It catalyses the reaction L-glutamate = D-glutamate. The protein operates within cell wall biogenesis; peptidoglycan biosynthesis. Provides the (R)-glutamate required for cell wall biosynthesis. This chain is Glutamate racemase, found in Thermoanaerobacter sp. (strain X514).